The chain runs to 310 residues: Putative S-adenosyl-L-methionine-dependent methyltransferase Mvan_1346 (310 aa).

Residues aspartate 136 and 165 to 166 (DL) each bind S-adenosyl-L-methionine.

This sequence belongs to the UPF0677 family.

In terms of biological role, exhibits S-adenosyl-L-methionine-dependent methyltransferase activity. This is Putative S-adenosyl-L-methionine-dependent methyltransferase Mvan_1346 from Mycolicibacterium vanbaalenii (strain DSM 7251 / JCM 13017 / BCRC 16820 / KCTC 9966 / NRRL B-24157 / PYR-1) (Mycobacterium vanbaalenii).